We begin with the raw amino-acid sequence, 149 residues long: Endoribonuclease YbeY (149 aa).

The Zn(2+) site is built by H112, H116, and H122.

Belongs to the endoribonuclease YbeY family. Zn(2+) serves as cofactor.

It localises to the cytoplasm. Functionally, single strand-specific metallo-endoribonuclease involved in late-stage 70S ribosome quality control and in maturation of the 3' terminus of the 16S rRNA. This Methylibium petroleiphilum (strain ATCC BAA-1232 / LMG 22953 / PM1) protein is Endoribonuclease YbeY.